A 183-amino-acid chain; its full sequence is Endoribonuclease YbeY (183 aa).

3 residues coordinate Zn(2+): histidine 142, histidine 146, and histidine 152.

The protein belongs to the endoribonuclease YbeY family. Requires Zn(2+) as cofactor.

The protein localises to the cytoplasm. In terms of biological role, single strand-specific metallo-endoribonuclease involved in late-stage 70S ribosome quality control and in maturation of the 3' terminus of the 16S rRNA. The polypeptide is Endoribonuclease YbeY (Trichodesmium erythraeum (strain IMS101)).